The chain runs to 283 residues: Diaminopimelate epimerase (283 aa).

Residues asparagine 14, glutamine 47, and asparagine 67 each coordinate substrate. Cysteine 76 serves as the catalytic Proton donor. Substrate contacts are provided by residues 77–78 (GN), asparagine 164, asparagine 197, and 215–216 (ER). Cysteine 224 (proton acceptor) is an active-site residue. Residue 225 to 226 (GT) participates in substrate binding.

The protein belongs to the diaminopimelate epimerase family. Homodimer.

It localises to the cytoplasm. The catalysed reaction is (2S,6S)-2,6-diaminopimelate = meso-2,6-diaminopimelate. It functions in the pathway amino-acid biosynthesis; L-lysine biosynthesis via DAP pathway; DL-2,6-diaminopimelate from LL-2,6-diaminopimelate: step 1/1. In terms of biological role, catalyzes the stereoinversion of LL-2,6-diaminopimelate (L,L-DAP) to meso-diaminopimelate (meso-DAP), a precursor of L-lysine and an essential component of the bacterial peptidoglycan. This is Diaminopimelate epimerase from Neisseria meningitidis serogroup A / serotype 4A (strain DSM 15465 / Z2491).